The following is a 243-amino-acid chain: Ubiquinone/menaquinone biosynthesis C-methyltransferase UbiE (243 aa).

Residues Thr69, Asp90, and Asp116–Ala117 each bind S-adenosyl-L-methionine.

It belongs to the class I-like SAM-binding methyltransferase superfamily. MenG/UbiE family.

The enzyme catalyses a 2-demethylmenaquinol + S-adenosyl-L-methionine = a menaquinol + S-adenosyl-L-homocysteine + H(+). It carries out the reaction a 2-methoxy-6-(all-trans-polyprenyl)benzene-1,4-diol + S-adenosyl-L-methionine = a 5-methoxy-2-methyl-3-(all-trans-polyprenyl)benzene-1,4-diol + S-adenosyl-L-homocysteine + H(+). It participates in quinol/quinone metabolism; menaquinone biosynthesis; menaquinol from 1,4-dihydroxy-2-naphthoate: step 2/2. The protein operates within cofactor biosynthesis; ubiquinone biosynthesis. Methyltransferase required for the conversion of demethylmenaquinol (DMKH2) to menaquinol (MKH2) and the conversion of 2-polyprenyl-6-methoxy-1,4-benzoquinol (DDMQH2) to 2-polyprenyl-3-methyl-6-methoxy-1,4-benzoquinol (DMQH2). The polypeptide is Ubiquinone/menaquinone biosynthesis C-methyltransferase UbiE (Burkholderia multivorans (strain ATCC 17616 / 249)).